A 263-amino-acid polypeptide reads, in one-letter code: Lysine 5,6-aminomutase beta subunit (263 aa).

The region spanning 120-259 (EVVMVGASTG…TFILKEMVQR (140 aa)) is the B12-binding domain. Adenosylcob(III)alamin-binding positions include 130–136 (TDAHTVG) and His133. An N6-(pyridoxal phosphate)lysine modification is found at Lys144. Adenosylcob(III)alamin is bound by residues 185–192 (LVSQTVTQ), 219–223 (IAGGA), and 239–244 (FGPGKY).

Belongs to the KamE family. Heterotetramer of 2 alpha and 2 beta subunits. Requires adenosylcob(III)alamin as cofactor. Pyridoxal 5'-phosphate serves as cofactor.

The enzyme catalyses (3S)-3,6-diaminohexanoate = (3S,5S)-3,5-diaminohexanoate. It catalyses the reaction D-lysine = (2R,5S)-2,5-diaminohexanoate. It participates in amino-acid degradation; L-lysine degradation via acetate pathway. Functionally, catalyzes the migration of the L-beta-lysine and D-lysine epsilon amino group to the delta carbon to produce 3,5-diaminohexanoate and 2,5-diaminohexanoate, respectively. This Fusobacterium nucleatum subsp. nucleatum (strain ATCC 25586 / DSM 15643 / BCRC 10681 / CIP 101130 / JCM 8532 / KCTC 2640 / LMG 13131 / VPI 4355) protein is Lysine 5,6-aminomutase beta subunit.